The sequence spans 85 residues: Large ribosomal subunit protein bL27 (85 aa).

Residues 1-27 (MAHKKAGGSTKNGRDSQSKRLGVKRYG) form a disordered region.

This sequence belongs to the bacterial ribosomal protein bL27 family.

This chain is Large ribosomal subunit protein bL27, found in Halorhodospira halophila (strain DSM 244 / SL1) (Ectothiorhodospira halophila (strain DSM 244 / SL1)).